The chain runs to 268 residues: Shikimate dehydrogenase (NADP(+)) (268 aa).

Shikimate is bound by residues 15-17 and Thr60; that span reads SKS. The Proton acceptor role is filled by Lys64. The shikimate site is built by Asn85 and Asp101. NADP(+) contacts are provided by residues 121-125 and Leu208; that span reads GAGGS. Tyr210 serves as a coordination point for shikimate. Gly230 is a binding site for NADP(+).

The protein belongs to the shikimate dehydrogenase family. Homodimer.

The catalysed reaction is shikimate + NADP(+) = 3-dehydroshikimate + NADPH + H(+). The protein operates within metabolic intermediate biosynthesis; chorismate biosynthesis; chorismate from D-erythrose 4-phosphate and phosphoenolpyruvate: step 4/7. Functionally, involved in the biosynthesis of the chorismate, which leads to the biosynthesis of aromatic amino acids. Catalyzes the reversible NADPH linked reduction of 3-dehydroshikimate (DHSA) to yield shikimate (SA). This chain is Shikimate dehydrogenase (NADP(+)), found in Helicobacter hepaticus (strain ATCC 51449 / 3B1).